The chain runs to 791 residues: Ubiquitin carboxyl-terminal hydrolase 10-A (791 aa).

Composition is skewed to polar residues over residues 118–139 and 270–284; these read FSESSIPDGSGNADSDGTSGTG and DTTENLGVTNGQTLE. Disordered regions lie at residues 118–156 and 270–291; these read FSESSIPDGSGNADSDGTSGTGQRERKKKKKRPPGYYSY and DTTENLGVTNGQTLESPEEDTA. Residues 408 to 788 form the USP domain; that stretch reads RGLINKGNWC…TAYLLYYRRV (381 aa). Cys417 functions as the Nucleophile in the catalytic mechanism. The interval 560–580 is disordered; it reads EVNKEEQEGSDEEWEQVGPRN. Residue His742 is the Proton acceptor of the active site.

This sequence belongs to the peptidase C19 family. USP10 subfamily.

Its subcellular location is the cytoplasm. The protein resides in the nucleus. The enzyme catalyses Thiol-dependent hydrolysis of ester, thioester, amide, peptide and isopeptide bonds formed by the C-terminal Gly of ubiquitin (a 76-residue protein attached to proteins as an intracellular targeting signal).. In terms of biological role, hydrolase that can remove conjugated ubiquitin from target proteins such as p53/tp53, rps2/us5, rps3/us3, rps10/eS10, becn1, snx3 and cftr. Acts as an essential regulator of p53/tp53 stability: in unstressed cells, specifically deubiquitinates p53/tp53 in the cytoplasm, leading to counteracts MDM2 action and stabilize p53/tp53. Following DNA damage, translocates to the nucleus and deubiquitinates p53/tp53, leading to regulate the p53/TP53-dependent DNA damage response. Component of a regulatory loop that controls autophagy and p53/tp53 levels. Plays a key role in 40S ribosome subunit recycling when a ribosome has stalled during translation: acts both by inhibiting formation of stress granules, which store stalled translation pre-initiation complexes, and mediating deubiquitination of 40S ribosome subunits. Deubiquitinates cftr in early endosomes, enhancing its endocytic recycling. The polypeptide is Ubiquitin carboxyl-terminal hydrolase 10-A (usp10-a) (Xenopus laevis (African clawed frog)).